Consider the following 449-residue polypeptide: Chitobiosyldiphosphodolichol beta-mannosyltransferase (449 aa).

Topologically, residues 1–7 (MFLEIPR) are lumenal. The helical transmembrane segment at 8–28 (WLLALIILYLSIPLVVYYVIP) threads the bilayer. The Dolichol recognition signature appears at 21–32 (LVVYYVIPYLFY). Residues 29–104 (YLFYGNKSTK…SNLKRKGGGT (76 aa)) are Cytoplasmic-facing. The segment at residues 105-125 (SVIFMVKKVLFQVLSIFKLLW) is an intramembrane region (helical). The Cytoplasmic segment spans residues 126–449 (ELRGSDYILV…RTMRDLKLIH (324 aa)). The tract at residues 435-449 (QSNWERTMRDLKLIH) is required for oligomerization.

The protein belongs to the glycosyltransferase group 1 family. Glycosyltransferase 33 subfamily. Homodimer. ALG1 forms mannosyltransferases (MT) heteromeric complexes with either ALG2 or ALG11.

The protein resides in the endoplasmic reticulum membrane. It carries out the reaction an N,N'-diacetylchitobiosyl-diphospho-di-trans,poly-cis-dolichol + GDP-alpha-D-mannose = a beta-D-Man-(1-&gt;4)-beta-D-GlcNAc-(1-&gt;4)-alpha-D-GlcNAc-diphospho-di-trans,poly-cis-dolichol + GDP + H(+). It functions in the pathway protein modification; protein glycosylation. Functionally, participates in the formation of the lipid-linked precursor oligosaccharide for N-glycosylation. Involved in assembling the dolichol-pyrophosphate-GlcNAc(2)-Man(5) intermediate on the cytoplasmic surface of the ER. The sequence is that of Chitobiosyldiphosphodolichol beta-mannosyltransferase (ALG1) from Saccharomyces cerevisiae (strain ATCC 204508 / S288c) (Baker's yeast).